The primary structure comprises 295 residues: UDP-N-acetylenolpyruvoylglucosamine reductase (295 aa).

An FAD-binding PCMH-type domain is found at Lys24–Gly188. Residue Arg168 is part of the active site. The Proton donor role is filled by Ser217. The active site involves Glu287.

It belongs to the MurB family. FAD is required as a cofactor.

The protein localises to the cytoplasm. It carries out the reaction UDP-N-acetyl-alpha-D-muramate + NADP(+) = UDP-N-acetyl-3-O-(1-carboxyvinyl)-alpha-D-glucosamine + NADPH + H(+). The protein operates within cell wall biogenesis; peptidoglycan biosynthesis. Its function is as follows. Cell wall formation. The chain is UDP-N-acetylenolpyruvoylglucosamine reductase from Rickettsia massiliae (strain Mtu5).